Reading from the N-terminus, the 153-residue chain is Ribosome maturation factor RimP (153 aa).

The protein belongs to the RimP family.

The protein resides in the cytoplasm. Required for maturation of 30S ribosomal subunits. This Vesicomyosocius okutanii subsp. Calyptogena okutanii (strain HA) protein is Ribosome maturation factor RimP.